A 580-amino-acid polypeptide reads, in one-letter code: MSEITTTDAQAQPEKKDFIRQIIREDLAHGTHTHIHTRFPPEPNGYLHIGHAKAICLDFGVAAEFGGHCTLRMDDTNPSKEDPAFAAAIQEDVSWLGFHWNALRHTSDYFEVLYLAAEKLIADGKAYVCDLNSQQVREYRGTLTEAGRPSPWRERSPDENLELFRQMRAGTFPDGTRTLRAKIDMASGNINLRDPALYRIKHVEHQNTGNTWPIYPMYDFAHALSDAIEGITHSLCTLEFEDHRPLYDWCINHVDLPNNSHLLKPLLDKGFPQEPSQPRQIEFSRLNINYTVMSKRKLTALVDEKLVEGWDDPRMYTLQGLRRRGYTPAAMRLFVERIGISKQNSIIDFSVLENCLRENLDTIAPRRMATIAPMKLVLTNLAEDHEEQLIFPNHPKDDTQGTRTVPFSRELWIERDDFSEAPPKGWKRLIPGGEVRLRGAGIARIDEVVKNAEGHVIALHGWLDPTSRPGMEGAHRKVKGTIHWVSAPHAVAAEIRLYDRLFSIEKPDDNTDGKTYRDFLNPDSKRVVHGYIEPAAAQTAPEHAFQFERLGYFVTDRHDHDATHPVFNRSVTLRDTWQRD.

A 'HIGH' region motif is present at residues Pro41 to His51. ATP-binding positions include Glu42–Asn44 and His48–Ala54. 2 residues coordinate L-glutamine: Asp74 and Tyr218. ATP is bound by residues Thr237, Arg285–Leu286, and Met293–Lys295. The 'KMSKS' region motif lies at Val292–Arg296.

Belongs to the class-I aminoacyl-tRNA synthetase family. In terms of assembly, monomer.

Its subcellular location is the cytoplasm. It catalyses the reaction tRNA(Gln) + L-glutamine + ATP = L-glutaminyl-tRNA(Gln) + AMP + diphosphate. The chain is Glutamine--tRNA ligase from Xylella fastidiosa (strain Temecula1 / ATCC 700964).